The primary structure comprises 235 residues: Ribosomal RNA large subunit methyltransferase E (235 aa).

S-adenosyl-L-methionine-binding residues include glycine 76, tryptophan 78, aspartate 99, aspartate 115, and aspartate 139. The Proton acceptor role is filled by lysine 179.

It belongs to the class I-like SAM-binding methyltransferase superfamily. RNA methyltransferase RlmE family.

Its subcellular location is the cytoplasm. It catalyses the reaction uridine(2552) in 23S rRNA + S-adenosyl-L-methionine = 2'-O-methyluridine(2552) in 23S rRNA + S-adenosyl-L-homocysteine + H(+). Its function is as follows. Specifically methylates the uridine in position 2552 of 23S rRNA at the 2'-O position of the ribose in the fully assembled 50S ribosomal subunit. The chain is Ribosomal RNA large subunit methyltransferase E from Rhodopseudomonas palustris (strain BisB5).